Here is a 259-residue protein sequence, read N- to C-terminus: Phosphatidylglycerol--prolipoprotein diacylglyceryl transferase (259 aa).

A run of 4 helical transmembrane segments spans residues 9–29 (IIFSIGPLAISWYSLSYVIGI), 55–75 (FITYAVIGIIVGGRLGFVLLY), 92–112 (EGGMSFHGGALGGIITAYLFC), and 117–137 (INFLSLTDIIAPVVPIGLFLG). Arginine 138 serves as a coordination point for a 1,2-diacyl-sn-glycero-3-phospho-(1'-sn-glycerol). The next 3 membrane-spanning stretches (helical) occupy residues 172-192 (QLYEAFFEGLVLFSILAYTTF), 201-221 (GLNSGIFFTFYGLFRITIEIF), and 228-248 (IGFILDSLTMGQILSVPMLLL).

It belongs to the Lgt family.

The protein resides in the cell inner membrane. It carries out the reaction L-cysteinyl-[prolipoprotein] + a 1,2-diacyl-sn-glycero-3-phospho-(1'-sn-glycerol) = an S-1,2-diacyl-sn-glyceryl-L-cysteinyl-[prolipoprotein] + sn-glycerol 1-phosphate + H(+). It functions in the pathway protein modification; lipoprotein biosynthesis (diacylglyceryl transfer). Its function is as follows. Catalyzes the transfer of the diacylglyceryl group from phosphatidylglycerol to the sulfhydryl group of the N-terminal cysteine of a prolipoprotein, the first step in the formation of mature lipoproteins. This chain is Phosphatidylglycerol--prolipoprotein diacylglyceryl transferase, found in Rickettsia africae (strain ESF-5).